A 316-amino-acid chain; its full sequence is Triplex capsid protein 2 (316 aa).

Belongs to the herpesviridae TRX2 protein family. Interacts with TRX1 and major capisd protein/MCP.

It is found in the virion. The protein resides in the host nucleus. In terms of biological role, structural component of the T=16 icosahedral capsid. The capsid is composed of pentamers and hexamers of major capsid protein/MCP, which are linked together by heterotrimers called triplexes. These triplexes are formed by a single molecule of triplex protein 1/TRX1 and two copies of triplex protein 2/TRX2. Additionally, TRX1 is required for efficient transport of TRX2 to the nucleus, which is the site of capsid assembly. In Homo sapiens (Human), this protein is Triplex capsid protein 2.